Consider the following 488-residue polypeptide: Cysteine--tRNA ligase (488 aa).

C29 serves as a coordination point for Zn(2+). A 'HIGH' region motif is present at residues 31-41 (ATVQGMPHVGH). Zn(2+) is bound by residues C227, H252, and E256. The 'KMSKS' region motif lies at 283–287 (KMSKS). K286 lines the ATP pocket.

It belongs to the class-I aminoacyl-tRNA synthetase family. As to quaternary structure, monomer. Requires Zn(2+) as cofactor.

The protein localises to the cytoplasm. The enzyme catalyses tRNA(Cys) + L-cysteine + ATP = L-cysteinyl-tRNA(Cys) + AMP + diphosphate. The polypeptide is Cysteine--tRNA ligase (Pseudarthrobacter chlorophenolicus (strain ATCC 700700 / DSM 12829 / CIP 107037 / JCM 12360 / KCTC 9906 / NCIMB 13794 / A6) (Arthrobacter chlorophenolicus)).